A 423-amino-acid polypeptide reads, in one-letter code: D-threonate kinase (423 aa).

Substrate contacts are provided by residues aspartate 9, arginine 51, and 81–84 (KIDS). ATP is bound by residues serine 245, 355 to 358 (GGDI), and glycine 401.

It belongs to the four-carbon acid sugar kinase family.

The catalysed reaction is D-threonate + ATP = 4-O-phospho-D-threonate + ADP + H(+). In terms of biological role, catalyzes the ATP-dependent phosphorylation of D-threonate to D-threonate 4-phosphate. Can also phosphorylate 4-hydroxy-L-threonine, with lower efficiency. This side reaction may serve to deal with the toxicity of 4-hydroxy-L-threonine by converting it into 4-hydroxy-L-threonine 4-phosphate, a useful product that can be used by PdxA2. The polypeptide is D-threonate kinase (Salmonella typhimurium (strain LT2 / SGSC1412 / ATCC 700720)).